The following is a 310-amino-acid chain: Malate dehydrogenase (310 aa).

NAD(+)-binding positions include 7–12 (GAGNVG) and aspartate 32. 2 residues coordinate substrate: arginine 81 and arginine 87. NAD(+) is bound by residues asparagine 94 and 117-119 (VSN). Positions 119 and 150 each coordinate substrate. The active-site Proton acceptor is the histidine 174.

The protein belongs to the LDH/MDH superfamily. MDH type 3 family.

The enzyme catalyses (S)-malate + NAD(+) = oxaloacetate + NADH + H(+). Functionally, catalyzes the reversible oxidation of malate to oxaloacetate. This chain is Malate dehydrogenase, found in Pelodictyon phaeoclathratiforme (strain DSM 5477 / BU-1).